A 166-amino-acid chain; its full sequence is Putative transcriptional regulatory protein for hcr operon (166 aa).

The HTH marR-type domain maps to 1 to 155 (MRKHRGKPAN…LIGLLKRLYR (155 aa)).

May be involved in the regulation of genes for 4-hydroxybenzoyl-CoA reductase. The polypeptide is Putative transcriptional regulatory protein for hcr operon (Thauera aromatica).